The sequence spans 369 residues: Coiled-coil domain-containing protein 149 (369 aa).

A coiled-coil region spans residues methionine 1–valine 249.

It belongs to the CCDC149 family. In terms of tissue distribution, expressed in amphid and phasmid ciliated neurons, and also pharyngeal, touch receptor and motor neurons.

The protein localises to the cell projection. The protein resides in the cilium. In Caenorhabditis elegans, this protein is Coiled-coil domain-containing protein 149.